The primary structure comprises 351 residues: UDP-N-acetylglucosamine--N-acetylmuramyl-(pentapeptide) pyrophosphoryl-undecaprenol N-acetylglucosamine transferase (351 aa).

Residues 12–14 (TGG), Asn-124, Arg-160, Ser-188, Ile-239, 258–263 (ALTVCE), and Gln-283 each bind UDP-N-acetyl-alpha-D-glucosamine.

Belongs to the glycosyltransferase 28 family. MurG subfamily.

The protein localises to the cell inner membrane. It catalyses the reaction di-trans,octa-cis-undecaprenyl diphospho-N-acetyl-alpha-D-muramoyl-L-alanyl-D-glutamyl-meso-2,6-diaminopimeloyl-D-alanyl-D-alanine + UDP-N-acetyl-alpha-D-glucosamine = di-trans,octa-cis-undecaprenyl diphospho-[N-acetyl-alpha-D-glucosaminyl-(1-&gt;4)]-N-acetyl-alpha-D-muramoyl-L-alanyl-D-glutamyl-meso-2,6-diaminopimeloyl-D-alanyl-D-alanine + UDP + H(+). It participates in cell wall biogenesis; peptidoglycan biosynthesis. Functionally, cell wall formation. Catalyzes the transfer of a GlcNAc subunit on undecaprenyl-pyrophosphoryl-MurNAc-pentapeptide (lipid intermediate I) to form undecaprenyl-pyrophosphoryl-MurNAc-(pentapeptide)GlcNAc (lipid intermediate II). This Actinobacillus pleuropneumoniae serotype 7 (strain AP76) protein is UDP-N-acetylglucosamine--N-acetylmuramyl-(pentapeptide) pyrophosphoryl-undecaprenol N-acetylglucosamine transferase.